The sequence spans 198 residues: Ribosome maturation factor RimM (198 aa).

Residues 1–21 (MPPPTASTPDDSADPGPDFAD) form a disordered region. The region spanning 122 to 195 (DDELFADDLV…RIVVRPIDGL (74 aa)) is the PRC barrel domain.

This sequence belongs to the RimM family. In terms of assembly, binds ribosomal protein uS19.

The protein localises to the cytoplasm. Functionally, an accessory protein needed during the final step in the assembly of 30S ribosomal subunit, possibly for assembly of the head region. Essential for efficient processing of 16S rRNA. May be needed both before and after RbfA during the maturation of 16S rRNA. It has affinity for free ribosomal 30S subunits but not for 70S ribosomes. The chain is Ribosome maturation factor RimM from Salinibacter ruber (strain DSM 13855 / M31).